A 1235-amino-acid polypeptide reads, in one-letter code: UPF0507 protein DEHA2G04334g (1235 aa).

A VPS9 domain is found at 323–487 (QNDDSDAIKI…LSSSMNDEPQ (165 aa)). Positions 1097–1124 (STTEADTTDTTDATDATHASPNLANSTN) are disordered. The span at 1100 to 1115 (EADTTDTTDATDATHA) shows a compositional bias: low complexity.

Belongs to the UPF0507 family.

This is UPF0507 protein DEHA2G04334g from Debaryomyces hansenii (strain ATCC 36239 / CBS 767 / BCRC 21394 / JCM 1990 / NBRC 0083 / IGC 2968) (Yeast).